A 232-amino-acid polypeptide reads, in one-letter code: MSGEGENPASKPTPVQDVQGDGRWMSLHHRFVADSKDKEPEVVFIGDSLVQLMHQCEIWRELFSPLHALNFGIGGDSTQHVLWRLENGELEHIRPKIVVVWVGTNNHSHTAEQVTGGIKAIVQLVNKLQPQARVVVLGLLPRGQHPNPLREKNRQVNELVRAALAGYPRAHFLDADPGFVHSDGTISHHDMYDYLHLSRLGYTPVCRALHSLLLRLLAQDQGQGIPLPETAS.

Residues 1–20 form a disordered region; that stretch reads MSGEGENPASKPTPVQDVQG. S2 bears the N-acetylserine mark. The residue at position 2 (S2) is a Phosphoserine. Residues S48, D193, and H196 contribute to the active site.

It belongs to the 'GDSL' lipolytic enzyme family. Platelet-activating factor acetylhydrolase IB beta/gamma subunits subfamily. As to quaternary structure, forms a catalytic dimer which is either homodimer (alpha1/alpha1 homodimer) or heterodimer with PAFAH1B2 (alpha1/alpha2 heterodimer). Component of the cytosolic (PAF-AH (I)) heterotetrameric enzyme, which is composed of PAFAH1B1 (beta), PAFAH1B2 (alpha2) and PAFAH1B3 (alpha1) subunits. The catalytic activity of the enzyme resides in the alpha1 (PAFAH1B3) and alpha2 (PAFAH1B2) subunits, whereas the beta subunit (PAFAH1B1) has regulatory activity. Trimer formation is not essential for the catalytic activity. Interacts with VLDLR; this interaction may modulate the Reelin pathway.

It is found in the cytoplasm. It carries out the reaction a 1-O-alkyl-2-acetyl-sn-glycero-3-phosphocholine + H2O = a 1-O-alkyl-sn-glycero-3-phosphocholine + acetate + H(+). The catalysed reaction is 1-O-hexadecyl-2-acetyl-sn-glycero-3-phosphocholine + H2O = 1-O-hexadecyl-sn-glycero-3-phosphocholine + acetate + H(+). The enzyme catalyses 1-O-hexadecyl-2-acetyl-sn-glycero-3-phosphate + H2O = 1-O-hexadecyl-sn-glycero-3-phosphate + acetate + H(+). Beta subunit (PAFAH1B1) inhibits the acetylhydrolase activity of the alpha1/alpha1 catalytic homodimer. Its function is as follows. Alpha1 catalytic subunit of the cytosolic type I platelet-activating factor (PAF) acetylhydrolase (PAF-AH (I)) heterotetrameric enzyme that catalyzes the hydrolyze of the acetyl group at the sn-2 position of PAF and its analogs and modulates the action of PAF. The activity and substrate specificity of PAF-AH (I) are affected by its subunit composition. Both alpha1/alpha1 homodimer (PAFAH1B3/PAFAH1B3 homodimer) and alpha1/alpha2 heterodimer(PAFAH1B3/PAFAH1B2 heterodimer) hydrolyze 1-O-alkyl-2-acetyl-sn-glycero-3-phosphoric acid (AAGPA) more efficiently than PAF, but they have little hydrolytic activity towards 1-O-alkyl-2-acetyl-sn-glycero-3-phosphorylethanolamine (AAGPE). Plays an important role during the development of brain. The chain is Platelet-activating factor acetylhydrolase IB subunit alpha1 from Mus musculus (Mouse).